The chain runs to 128 residues: MANLEKLVEDLSALTVLEAAELSKMLEEKWGVSAAAPVAVAAAPAAGGGEAAPAGEEQTEFTVVLTAGGDKKINVIKEVRGVRPDLGLKEAKDLVEGAPQNVKENVSKQEAEEIKKKLEEAGASVQIK.

It belongs to the bacterial ribosomal protein bL12 family. In terms of assembly, homodimer. Part of the ribosomal stalk of the 50S ribosomal subunit. Forms a multimeric L10(L12)X complex, where L10 forms an elongated spine to which 2 to 4 L12 dimers bind in a sequential fashion. Binds GTP-bound translation factors.

Its function is as follows. Forms part of the ribosomal stalk which helps the ribosome interact with GTP-bound translation factors. Is thus essential for accurate translation. This chain is Large ribosomal subunit protein bL12, found in Phenylobacterium zucineum (strain HLK1).